The following is a 299-amino-acid chain: Diaminopimelate epimerase (299 aa).

Positions 11 and 63 each coordinate substrate. Residue Cys72 is the Proton donor of the active site. Substrate is bound by residues 73-74 (GN), Asn211, and 229-230 (ER). Residue Cys238 is the Proton acceptor of the active site. 239 to 240 (GT) lines the substrate pocket.

Belongs to the diaminopimelate epimerase family. As to quaternary structure, homodimer.

Its subcellular location is the cytoplasm. The catalysed reaction is (2S,6S)-2,6-diaminopimelate = meso-2,6-diaminopimelate. It functions in the pathway amino-acid biosynthesis; L-lysine biosynthesis via DAP pathway; DL-2,6-diaminopimelate from LL-2,6-diaminopimelate: step 1/1. Catalyzes the stereoinversion of LL-2,6-diaminopimelate (L,L-DAP) to meso-diaminopimelate (meso-DAP), a precursor of L-lysine and an essential component of the bacterial peptidoglycan. The chain is Diaminopimelate epimerase from Natranaerobius thermophilus (strain ATCC BAA-1301 / DSM 18059 / JW/NM-WN-LF).